The primary structure comprises 304 residues: Acetyl-coenzyme A carboxylase carboxyl transferase subunit beta (304 aa).

One can recognise a CoA carboxyltransferase N-terminal domain in the interval 23–292 (VWTKCDSCGQ…PNPDAPREGV (270 aa)). Zn(2+) is bound by residues Cys27, Cys30, Cys46, and Cys49. The segment at 27–49 (CDSCGQVLYRAELERNLEVCPKC) adopts a C4-type zinc-finger fold. Residues 283 to 304 (PNPDAPREGVVVPPAPDQESEA) form a disordered region.

This sequence belongs to the AccD/PCCB family. As to quaternary structure, acetyl-CoA carboxylase is a heterohexamer composed of biotin carboxyl carrier protein (AccB), biotin carboxylase (AccC) and two subunits each of ACCase subunit alpha (AccA) and ACCase subunit beta (AccD). It depends on Zn(2+) as a cofactor.

It is found in the cytoplasm. The enzyme catalyses N(6)-carboxybiotinyl-L-lysyl-[protein] + acetyl-CoA = N(6)-biotinyl-L-lysyl-[protein] + malonyl-CoA. Its pathway is lipid metabolism; malonyl-CoA biosynthesis; malonyl-CoA from acetyl-CoA: step 1/1. In terms of biological role, component of the acetyl coenzyme A carboxylase (ACC) complex. Biotin carboxylase (BC) catalyzes the carboxylation of biotin on its carrier protein (BCCP) and then the CO(2) group is transferred by the transcarboxylase to acetyl-CoA to form malonyl-CoA. The polypeptide is Acetyl-coenzyme A carboxylase carboxyl transferase subunit beta (Salmonella agona (strain SL483)).